Reading from the N-terminus, the 390-residue chain is Homoserine O-succinyltransferase (390 aa).

One can recognise an AB hydrolase-1 domain in the interval 59 to 369 (NAVLVCHALN…PHGHDAFLLD (311 aa)). S165 functions as the Nucleophile in the catalytic mechanism. R235 is a substrate binding site. Residues D330 and H363 contribute to the active site. Position 364 (D364) interacts with substrate.

This sequence belongs to the AB hydrolase superfamily. MetX family. Homodimer.

It is found in the cytoplasm. It carries out the reaction L-homoserine + succinyl-CoA = O-succinyl-L-homoserine + CoA. It functions in the pathway amino-acid biosynthesis; L-methionine biosynthesis via de novo pathway; O-succinyl-L-homoserine from L-homoserine: step 1/1. In terms of biological role, transfers a succinyl group from succinyl-CoA to L-homoserine, forming succinyl-L-homoserine. The sequence is that of Homoserine O-succinyltransferase from Cupriavidus pinatubonensis (strain JMP 134 / LMG 1197) (Cupriavidus necator (strain JMP 134)).